Reading from the N-terminus, the 783-residue chain is Probable alpha,alpha-trehalose-phosphate synthase [UDP-forming] 3 (783 aa).

The interval 11–456 (QTLLVVANRL…GFDFLSELND (446 aa)) is glycosyltransferase.

The protein in the N-terminal section; belongs to the glycosyltransferase 20 family. In the C-terminal section; belongs to the trehalose phosphatase family.

It carries out the reaction D-glucose 6-phosphate + UDP-alpha-D-glucose = alpha,alpha-trehalose 6-phosphate + UDP + H(+). This is Probable alpha,alpha-trehalose-phosphate synthase [UDP-forming] 3 (TPS3) from Arabidopsis thaliana (Mouse-ear cress).